The following is a 214-amino-acid chain: NAD(P)H-quinone oxidoreductase subunit 6, chloroplastic (214 aa).

Transmembrane regions (helical) follow at residues 10–30 (FSLF…VLLP), 32–52 (ILYS…IYLL), 61–81 (AQVL…IMLV), 102–122 (IIGL…VTTP), and 163–183 (LLPF…AIVI).

This sequence belongs to the complex I subunit 6 family. As to quaternary structure, NDH is composed of at least 16 different subunits, 5 of which are encoded in the nucleus.

The protein resides in the plastid. The protein localises to the chloroplast thylakoid membrane. It catalyses the reaction a plastoquinone + NADH + (n+1) H(+)(in) = a plastoquinol + NAD(+) + n H(+)(out). The catalysed reaction is a plastoquinone + NADPH + (n+1) H(+)(in) = a plastoquinol + NADP(+) + n H(+)(out). Its function is as follows. NDH shuttles electrons from NAD(P)H:plastoquinone, via FMN and iron-sulfur (Fe-S) centers, to quinones in the photosynthetic chain and possibly in a chloroplast respiratory chain. The immediate electron acceptor for the enzyme in this species is believed to be plastoquinone. Couples the redox reaction to proton translocation, and thus conserves the redox energy in a proton gradient. This Chlorokybus atmophyticus (Soil alga) protein is NAD(P)H-quinone oxidoreductase subunit 6, chloroplastic (ndhG).